Reading from the N-terminus, the 618-residue chain is Grainyhead-like protein 1 homolog (618 aa).

A transcription activation region spans residues 1–91 (MTQEYDNKRP…EGEHPEPEHS (91 aa)). Over residues 76-92 (SSAVKPEGEHPEPEHSK) the composition is skewed to basic and acidic residues. The disordered stretch occupies residues 76 to 100 (SSAVKPEGEHPEPEHSKRNSIPNVT). Thr-208 is subject to Phosphothreonine. A Grh/CP2 DB domain is found at 248–474 (SGNNFEYTLE…DLDTQPVLFI (227 aa)). 2 interaction with DNA regions span residues 380–389 (TDFSSQKGVK) and 427–430 (RKIR).

The protein belongs to the grh/CP2 family. Grainyhead subfamily. Binds DNA as homodimer. Homodimer, also forms heterodimers with GRHL2 or GRHL3. Methylation at Arg-9 and Lys-116 may be involved in regulating transcriptional activation. In terms of tissue distribution, isoform 1 is highly expressed in brain, pancreas, tonsil, placenta and kidney. Isoform 2 is highly expressed in brain and liver. Expression in the skin is confined to the suprabasal layers of the epidermis and to the hair follicles.

It is found in the nucleus. Transcription factor involved in epithelial development. Binds directly to the consensus DNA sequence 5'-AACCGGTT-3'. Important regulator of DSG1 in the context of hair anchorage and epidermal differentiation, participates in the maintenance of the skin barrier. There is no genetic interaction with GRHL3, nor functional cooperativity due to diverse target gene selectivity during epithelia development. May play a role in regulating glucose homeostasis and insulin signaling. This is Grainyhead-like protein 1 homolog from Mus musculus (Mouse).